Reading from the N-terminus, the 259-residue chain is Small ribosomal subunit protein uS2 (259 aa).

This sequence belongs to the universal ribosomal protein uS2 family.

The chain is Small ribosomal subunit protein uS2 from Streptococcus pneumoniae (strain Hungary19A-6).